Reading from the N-terminus, the 173-residue chain is Bifunctional protein PyrR (173 aa).

The PRPP-binding signature appears at 93-105 (VILVDDVLYTGRT).

This sequence belongs to the purine/pyrimidine phosphoribosyltransferase family. PyrR subfamily. Homodimer and homohexamer; in equilibrium.

The enzyme catalyses UMP + diphosphate = 5-phospho-alpha-D-ribose 1-diphosphate + uracil. Its function is as follows. Regulates transcriptional attenuation of the pyrimidine nucleotide (pyr) operon by binding in a uridine-dependent manner to specific sites on pyr mRNA. This disrupts an antiterminator hairpin in the RNA and favors formation of a downstream transcription terminator, leading to a reduced expression of downstream genes. In terms of biological role, also displays a weak uracil phosphoribosyltransferase activity which is not physiologically significant. This chain is Bifunctional protein PyrR, found in Streptococcus suis (strain 05ZYH33).